Reading from the N-terminus, the 522-residue chain is Signal transduction histidine-protein kinase/phosphatase MprB (522 aa).

Over 1-30 the chain is Cytoplasmic; it reads MIRLHRPQRPPLRAPLRATPSLSLRWRVML. Residues 31 to 51 traverse the membrane as a helical segment; that stretch reads LAMSMVAMVVVLMAFAVYAVI. The Extracellular segment spans residues 52–167; the sequence is SAALYSDIDN…PTEAVMNKLR (116 aa). A helical transmembrane segment spans residues 168-188; that stretch reads WVLLIVGGVGVAVAAVAGGMV. Topologically, residues 189 to 522 are cytoplasmic; that stretch reads TRAGLRPVAR…SVDSQSARAR (334 aa). The HAMP domain maps to 190-242; the sequence is RAGLRPVARLTEAAERVARTDDLRPIPVFGSDELARLTESFNLMLRALAESRE. Positions 250–470 constitute a Histidine kinase domain; that stretch reads DAGHELRTPL…SFYVLLPGRP (221 aa). Histidine 253 carries the post-translational modification Phosphohistidine; by autocatalysis. The segment at 468 to 522 is disordered; the sequence is GRPLPPAGHSTPAGESETDKAEAATDPAVPVAGDTANSRESANVISVDSQSARAR. Residues 502-522 show a composition bias toward polar residues; it reads TANSRESANVISVDSQSARAR.

Mg(2+) is required as a cofactor. Mn(2+) serves as cofactor. Post-translationally, autophosphorylated.

The protein localises to the cell membrane. The enzyme catalyses ATP + protein L-histidine = ADP + protein N-phospho-L-histidine.. Functionally, member of the two-component regulatory system MprB/MprA which contributes to maintaining a balance among several systems involved in stress resistance and is required for establishment and maintenance of persistent infection in the host. In response to environmental signals MprB acts both as a membrane-associated protein kinase that undergoes autophosphorylation and subsequently transfers the phosphate to MprA, and a protein phosphatase that dephosphorylates phospho-MprA. This chain is Signal transduction histidine-protein kinase/phosphatase MprB (mprB), found in Mycobacterium avium (strain 104).